The primary structure comprises 175 residues: Small ribosomal subunit protein uS5 (175 aa).

Residues 19–82 (WQERVIQIRR…ADGKKHLIDI (64 aa)) enclose the S5 DRBM domain.

Belongs to the universal ribosomal protein uS5 family. Part of the 30S ribosomal subunit. Contacts proteins S4 and S8.

With S4 and S12 plays an important role in translational accuracy. Its function is as follows. Located at the back of the 30S subunit body where it stabilizes the conformation of the head with respect to the body. This is Small ribosomal subunit protein uS5 from Nostoc punctiforme (strain ATCC 29133 / PCC 73102).